A 330-amino-acid chain; its full sequence is Glycerol-3-phosphate dehydrogenase [NAD(P)+] (330 aa).

NADPH is bound by residues serine 10, tryptophan 11, arginine 31, and lysine 105. Lysine 105, glycine 135, and serine 137 together coordinate sn-glycerol 3-phosphate. Alanine 139 is a binding site for NADPH. Positions 190, 243, 253, 254, and 255 each coordinate sn-glycerol 3-phosphate. Catalysis depends on lysine 190, which acts as the Proton acceptor. Residue arginine 254 participates in NADPH binding. NADPH-binding residues include valine 278 and glutamate 280.

The protein belongs to the NAD-dependent glycerol-3-phosphate dehydrogenase family.

Its subcellular location is the cytoplasm. The enzyme catalyses sn-glycerol 3-phosphate + NAD(+) = dihydroxyacetone phosphate + NADH + H(+). It catalyses the reaction sn-glycerol 3-phosphate + NADP(+) = dihydroxyacetone phosphate + NADPH + H(+). It participates in membrane lipid metabolism; glycerophospholipid metabolism. Catalyzes the reduction of the glycolytic intermediate dihydroxyacetone phosphate (DHAP) to sn-glycerol 3-phosphate (G3P), the key precursor for phospholipid synthesis. The sequence is that of Glycerol-3-phosphate dehydrogenase [NAD(P)+] from Nitratidesulfovibrio vulgaris (strain ATCC 29579 / DSM 644 / CCUG 34227 / NCIMB 8303 / VKM B-1760 / Hildenborough) (Desulfovibrio vulgaris).